The chain runs to 810 residues: MERAKMAEESLETAAEHERILREIESTDTACIGPTLRSVYDGEEHGRFMEKLETRIRNHDREIEKMCNFHYQGFVDSITELLKVRGEAQKLKNQVTDTNRKLQHEGKELVIAMEELKQCRLQQRNISATVDKLMLCLPVLEMYSKLRDQMKTKRHYPALKTLEHLEHTYLPQVSHYRFCKVMVDNIPKLREEIKDVSMSDLKDFLESIRKHSDKIGETAMKQAQQQRNLDNIVLQQPRIGSKRKSKKDVYTIFDAEVESTSPKSEQDSGILDVEDEEDDEEVPGAQDLVDFSPVYRCLHIYSVLGARETFENYYRKQRRKQARLVLQPPSNMHETLDGYRKYFNQIVGFFVVEDHILHTTQGLVNRAYIDELWEMALSKTIAALRTHSSYCSDPNLVLDLKNLIVLFADTLQVYGFPVNQLFDMLLEIRDQYSETLLKKWAGVFRNILDSDNYSPIPVTSEETYKKVVGQFPFQDIELEKQPFPKKFPFSEFVPKVYNQIKEFIYACLKFSEDLHLSSTEVDDMIRKSTNLLLTRTLSNSLQNVIKRKNIGLTELVQIIINTTHLEKSCKYLEEFITNITNVLPETVHTTKLYGTTTFKDARHAAEEEIYTNLNQKIDQFLQLADYDWMTGDLDNKASDYLVDLIAFLRSTFAVFTHLPGKVAQTACMSACKHLATSLMQLLLEAEVRQLTLGALQQFNLDVRECEQFARSGPVPGFQEDTLQLAFIDLRQLLDLFIQWDWSTYLADYGQPNCKYLRVNPVTALTLLEKMKDTSRKNNMFAQFRKNERDKQKLIDTVAKQLRGLISSHHS.

Residues 79–118 are a coiled coil; sequence TELLKVRGEAQKLKNQVTDTNRKLQHEGKELVIAMEELKQ. The disordered stretch occupies residues 258–282; it reads ESTSPKSEQDSGILDVEDEEDDEEV. Positions 272–282 are enriched in acidic residues; sequence DVEDEEDDEEV.

It belongs to the SEC15 family. In terms of assembly, the exocyst complex is composed of SEC3, SEC5, SEC6, SEC8, SEC10, SEC15, EXO70 and EXO84.

Its function is as follows. Component of the exocyst complex involved in the docking of exocytic vesicles with fusion sites on the plasma membrane. This is Exocyst complex component 6B (Exoc6b) from Mus musculus (Mouse).